The primary structure comprises 469 residues: Cytochrome c biogenesis protein CcsB (469 aa).

Transmembrane regions (helical) follow at residues 30 to 50 (LRLA…GTVI), 89 to 109 (TPWF…CSLT), and 175 to 195 (IGPI…IWGS).

The protein belongs to the Ccs1/CcsB family. In terms of assembly, may interact with CcsA.

The protein resides in the cellular thylakoid membrane. Its function is as follows. Required during biogenesis of c-type cytochromes (cytochrome c6 and cytochrome f) at the step of heme attachment. The protein is Cytochrome c biogenesis protein CcsB of Synechococcus sp. (strain JA-2-3B'a(2-13)) (Cyanobacteria bacterium Yellowstone B-Prime).